The sequence spans 1073 residues: Pleckstrin homology domain-containing family G member 5 (1073 aa).

Disordered regions lie at residues 1 to 28 (MGTGPGVSGRRAAARPSSELPSPDSQLL), 91 to 135 (VSTR…ARRR), 217 to 261 (PGDE…ESSL), 278 to 309 (GEAGIPGHEPPAPSSCSLPVGSSGGTSSGINE), and 367 to 388 (SWEEEEEDDEEDEESSGLRLED). Basic and acidic residues-rich tracts occupy residues 217–231 (PGDEGKVEQGVKDSK) and 249–260 (ERVDPQSRRESS). The span at 367–381 (SWEEEEEDDEEDEES) shows a compositional bias: acidic residues. A DH domain is found at 406–598 (HQQEAVWELL…ERFIHHVNTC (193 aa)). Positions 654–754 (QLLLEGSLRM…WVDTIYNAQN (101 aa)) constitute a PH domain. 3 disordered regions span residues 762–818 (QLSA…TSDG), 833–873 (TLSS…GPVD), and 899–925 (PVVEPAPVPQTPSPQPSPRLRRRTPVQ). Residues 777–790 (LEEEEDEQEEEGEE) are compositionally biased toward acidic residues. 2 stretches are compositionally biased toward polar residues: residues 791–809 (SGTSAASSPTILRKSSNSL) and 844–864 (VSSQSDESSLSNTASSVTPTS). Thr793 is modified (phosphothreonine). Position 798 is a phosphoserine (Ser798). Residues 900–915 (VVEPAPVPQTPSPQPS) are compositionally biased toward pro residues. Thr909 bears the Phosphothreonine mark. A phosphoserine mark is found at Ser911, Ser936, and Ser941. Residues 993–1046 (MCDPCHGPQLSESENRPSHMTGGPADSARRRCREMPSGTMSRVQSEPPSGVSAQ) form a disordered region. The segment covering 1030 to 1039 (GTMSRVQSEP) has biased composition (polar residues).

In terms of assembly, interacts with GIPC1/synectin and RHOA. As to expression, expressed in neurons and glial cells of the peripheral nervous system, with highest levels of expression in the brain and sciatic nerve endoneurium. Isoform 2 is expressed at detectable levels only in malignant cells.

The protein localises to the cytoplasm. Its subcellular location is the perinuclear region. The protein resides in the cell membrane. It is found in the cell junction. It localises to the cell projection. The protein localises to the lamellipodium. Functionally, functions as a guanine exchange factor (GEF) for RAB26 and thus regulates autophagy of synaptic vesicles in axon terminal of motoneurons. Involved in the control of neuronal cell differentiation. Plays a role in angiogenesis through regulation of endothelial cells chemotaxis. Also affects the migration, adhesion, and matrix/bone degradation in macrophages and osteoclasts. This is Pleckstrin homology domain-containing family G member 5 (Plekhg5) from Mus musculus (Mouse).